A 966-amino-acid chain; its full sequence is C4 phosphoenolpyruvate carboxylase (966 aa).

Residue S11 is modified to Phosphoserine. H172 is an active-site residue. 3 residues coordinate D-glucose 6-phosphate: W283, R450, and D597. The active site involves K600. R635 is a D-glucose 6-phosphate binding site. R641 is a catalytic residue. R641 contributes to the L-aspartate binding site. D-glucose 6-phosphate is bound at residue T665. Q673 is an L-aspartate binding site. D-glucose 6-phosphate-binding positions include R753 and R767–I769. Residues K829, R888, and N964 each contribute to the L-aspartate site.

The protein belongs to the PEPCase type 1 family. Homotetramer. Requires Mg(2+) as cofactor. Expressed in mesophyll cells, but not in bundle-sheath, roots, stems and flowers.

Its subcellular location is the cytoplasm. The catalysed reaction is oxaloacetate + phosphate = phosphoenolpyruvate + hydrogencarbonate. Its pathway is photosynthesis; C4 acid pathway. With respect to regulation, 5 fold activation by the allosteric regulator glucose-6-phosphate. Low sensitivity to inhibition by L-malate and L-aspartate. Up-regulated by light-reversible phosphorylation. Functionally, forms oxaloacetate through the carboxylation of phosphoenolpyruvate (PEP). Catalyzes the first step of C4 photosynthesis. The chain is C4 phosphoenolpyruvate carboxylase from Flaveria trinervia (Clustered yellowtops).